A 152-amino-acid polypeptide reads, in one-letter code: ESAT-6 secretion machinery protein EssA (152 aa).

Over 1-114 the chain is Cytoplasmic; it reads MLMNSVIALT…PYIQNKQEKK (114 aa). Residues 115–135 form a helical membrane-spanning segment; it reads IFPYILMSVGAFLTLGFVIFS. Topologically, residues 136 to 152 are extracellular; that stretch reads IHKGRRTKNESARKSNI.

It belongs to the EssA family.

The protein localises to the cell membrane. Its function is as follows. Component of the ESAT-6 secretion system (Ess). Required for the secretion of EsxA and EsxB. The sequence is that of ESAT-6 secretion machinery protein EssA from Staphylococcus aureus (strain Mu50 / ATCC 700699).